A 443-amino-acid chain; its full sequence is Chromosomal replication initiator protein DnaA (443 aa).

Residues 1 to 76 (MMDAWPRCLE…GNGEVALAVG (76 aa)) are domain I, interacts with DnaA modulators. Positions 76-105 (GSRPRAPEPAPAPVAATIAPQAAPIAPFAG) are domain II. The tract at residues 106–323 (NLDSHYTFAN…GALNTLVARA (218 aa)) is domain III, AAA+ region. Glycine 151, glycine 153, lysine 154, and threonine 155 together coordinate ATP. The interval 324-443 (NFTGRSITVE…WEKLIRKLSE (120 aa)) is domain IV, binds dsDNA.

It belongs to the DnaA family. As to quaternary structure, oligomerizes as a right-handed, spiral filament on DNA at oriC.

It is found in the cytoplasm. Plays an essential role in the initiation and regulation of chromosomal replication. ATP-DnaA binds to the origin of replication (oriC) to initiate formation of the DNA replication initiation complex once per cell cycle. Binds the DnaA box (a 9 base pair repeat at the origin) and separates the double-stranded (ds)DNA. Forms a right-handed helical filament on oriC DNA; dsDNA binds to the exterior of the filament while single-stranded (ss)DNA is stabiized in the filament's interior. The ATP-DnaA-oriC complex binds and stabilizes one strand of the AT-rich DNA unwinding element (DUE), permitting loading of DNA polymerase. After initiation quickly degrades to an ADP-DnaA complex that is not apt for DNA replication. Binds acidic phospholipids. The chain is Chromosomal replication initiator protein DnaA from Xanthomonas oryzae pv. oryzae (strain KACC10331 / KXO85).